The sequence spans 273 residues: Putative pyruvate, phosphate dikinase regulatory protein (273 aa).

An ADP-binding site is contributed by 149 to 156 (GPSRTSKT).

This sequence belongs to the pyruvate, phosphate/water dikinase regulatory protein family. PDRP subfamily.

It carries out the reaction N(tele)-phospho-L-histidyl/L-threonyl-[pyruvate, phosphate dikinase] + ADP = N(tele)-phospho-L-histidyl/O-phospho-L-threonyl-[pyruvate, phosphate dikinase] + AMP + H(+). The enzyme catalyses N(tele)-phospho-L-histidyl/O-phospho-L-threonyl-[pyruvate, phosphate dikinase] + phosphate + H(+) = N(tele)-phospho-L-histidyl/L-threonyl-[pyruvate, phosphate dikinase] + diphosphate. In terms of biological role, bifunctional serine/threonine kinase and phosphorylase involved in the regulation of the pyruvate, phosphate dikinase (PPDK) by catalyzing its phosphorylation/dephosphorylation. The chain is Putative pyruvate, phosphate dikinase regulatory protein from Rickettsia africae (strain ESF-5).